The following is a 1070-amino-acid chain: DNA-directed RNA polymerase subunit beta (1070 aa).

The protein belongs to the RNA polymerase beta chain family. As to quaternary structure, in plastids the minimal PEP RNA polymerase catalytic core is composed of four subunits: alpha, beta, beta', and beta''. When a (nuclear-encoded) sigma factor is associated with the core the holoenzyme is formed, which can initiate transcription.

It is found in the plastid. Its subcellular location is the chloroplast. It carries out the reaction RNA(n) + a ribonucleoside 5'-triphosphate = RNA(n+1) + diphosphate. Functionally, DNA-dependent RNA polymerase catalyzes the transcription of DNA into RNA using the four ribonucleoside triphosphates as substrates. The chain is DNA-directed RNA polymerase subunit beta from Dioscorea elephantipes (Elephant's foot yam).